Here is a 159-residue protein sequence, read N- to C-terminus: IQ domain-containing protein J (159 aa).

An IQ domain is found at 47–67; it reads ESKVKIIQRAWREYLQRQEPL. The segment at 63–88 is disordered; that stretch reads RQEPLGKRSPSPPSVSSEKLSSSVSM. The span at 76–87 shows a compositional bias: low complexity; it reads SVSSEKLSSSVS.

This chain is IQ domain-containing protein J, found in Homo sapiens (Human).